Reading from the N-terminus, the 410-residue chain is O-methyltransferase afvC (410 aa).

S-adenosyl-L-methionine is bound by residues 253–254 (GG), Asp278, 299–300 (DF), and Arg315. His319 acts as the Proton acceptor in catalysis.

It belongs to the class I-like SAM-binding methyltransferase superfamily. Cation-independent O-methyltransferase family. COMT subfamily.

It participates in secondary metabolite biosynthesis. Functionally, O-methyltransferase; part of the gene cluster that mediates the biosynthesis of aflavarin, a bicoumarin that exhibits anti-insectan activity against the fungivorous beetle C.hemipterus. This chain is O-methyltransferase afvC, found in Aspergillus flavus (strain ATCC 200026 / FGSC A1120 / IAM 13836 / NRRL 3357 / JCM 12722 / SRRC 167).